Reading from the N-terminus, the 215-residue chain is Tricarboxylate transporter ALT9 (215 aa).

Solcar repeat units follow at residues 18 to 106 and 111 to 197; these read TTVV…LAPM and CGVS…VVRL. Transmembrane regions (helical) follow at residues 19 to 39, 112 to 132, and 182 to 202; these read TVVGNMVAGMCAGVAESVLVL, GVSTSVVAGALAGVITVYCTM, and VAGAIAFTLYEEVVRLTGFLV.

It belongs to the mitochondrial carrier (TC 2.A.29) family.

It localises to the mitochondrion inner membrane. It functions in the pathway mycotoxin biosynthesis. Functionally, tricarboxylate transporter; part of the gene cluster that mediates the biosynthesis of the host-selective toxins (HSTs) AAL-toxins, sphinganine-analog mycotoxins responsible for Alternaria stem canker on tomato by the tomato pathotype. The biosynthesis starts with the polyketide synthase ALT1-catalyzed C-16 carbon chain assembly from one starter acetyl-CoA unit with malonyl-CoA extender units. ALT1 also selectively transfers methyl groups at the first and the third cycle of chain elongation for AAL toxin. The C-16 polyketide chain is released from the enzyme by a nucleophilic attack of a carbanion, which is derived from R-carbon of glycin by decarboxylation, on the carbonyl carbon of polyketide acyl chain. This step is probably catalyzed by a pyridoxal 5'-phosphate-dependent aminoacyl transferase ALT4. The respective functions of the other enzymes encoded by the cluster have still to be elucidated. The sphingosine N-acyltransferase-like protein ALT7 seems not to act as a resistance/self-tolerance factor against the toxin in the toxin biosynthetic gene cluster, contrary to what is expected. This Alternaria alternata (Alternaria rot fungus) protein is Tricarboxylate transporter ALT9.